The chain runs to 494 residues: Cytochrome P450 2G1 (494 aa).

Position 439 (Cys439) interacts with heme.

Belongs to the cytochrome P450 family. Heme is required as a cofactor. As to expression, olfactory epithelium.

It localises to the endoplasmic reticulum membrane. It is found in the microsome membrane. The catalysed reaction is an organic molecule + reduced [NADPH--hemoprotein reductase] + O2 = an alcohol + oxidized [NADPH--hemoprotein reductase] + H2O + H(+). In terms of biological role, cytochromes P450 are a group of heme-thiolate monooxygenases. This isozyme seems to be implicated in olfaction. The sequence is that of Cytochrome P450 2G1 (CYP2G1) from Oryctolagus cuniculus (Rabbit).